Here is a 629-residue protein sequence, read N- to C-terminus: tRNA uridine 5-carboxymethylaminomethyl modification enzyme MnmG (629 aa).

Residues 13 to 18 (GGGHAG), Val-125, and Ser-180 contribute to the FAD site. NAD(+) is bound at residue 273-287 (GPRYCPSIEDKVMRF). Gln-370 lines the FAD pocket.

This sequence belongs to the MnmG family. Homodimer. Heterotetramer of two MnmE and two MnmG subunits. FAD serves as cofactor.

It is found in the cytoplasm. In terms of biological role, NAD-binding protein involved in the addition of a carboxymethylaminomethyl (cmnm) group at the wobble position (U34) of certain tRNAs, forming tRNA-cmnm(5)s(2)U34. The protein is tRNA uridine 5-carboxymethylaminomethyl modification enzyme MnmG of Salmonella choleraesuis (strain SC-B67).